Consider the following 313-residue polypeptide: Protein FixB (313 aa).

255–283 (LYLAVGISGQIQHMVGANASQTIFAINKD) is a binding site for FAD.

This sequence belongs to the ETF alpha-subunit/FixB family. As to quaternary structure, heterodimer of FixA and FixB.

The protein operates within amine and polyamine metabolism; carnitine metabolism. In terms of biological role, required for anaerobic carnitine reduction. May bring reductant to CaiA. This chain is Protein FixB, found in Escherichia coli O17:K52:H18 (strain UMN026 / ExPEC).